Consider the following 328-residue polypeptide: MSVTAAADIQLTASGRLRHFLTIEGLSRELLTRIMDTAESFAGVTAQNVKKVPLLRGKTVVNLFFENSTRTRTTFELAAKRLSADVLNINIATSATSKGESLLDTIRNLEAMHVDMFVVRHAQSGAAHFIARHVAPHISVLNAGDGRHAHPTQAMLDVFTIRRAKGGFAGLKVAIVGDILHSRVARSEIWALNTLGVDEVRVVAPKTLLPAHVEALGVVPYHDLNEGLRDVDVVIMLRLQLERMGSAFIPSEHEYFQRFGLTEKRLEKARPDVIVMHPGPINRGIEIDSAIADGPRSVILQQVTHGIAVRMAVMSMAMHAGPDLEVPV.

Carbamoyl phosphate-binding residues include R70 and T71. Residue K98 participates in L-aspartate binding. Positions 120, 150, and 153 each coordinate carbamoyl phosphate. Positions 183 and 238 each coordinate L-aspartate. Carbamoyl phosphate contacts are provided by G279 and P280.

It belongs to the aspartate/ornithine carbamoyltransferase superfamily. ATCase family. In terms of assembly, heterododecamer (2C3:3R2) of six catalytic PyrB chains organized as two trimers (C3), and six regulatory PyrI chains organized as three dimers (R2).

It catalyses the reaction carbamoyl phosphate + L-aspartate = N-carbamoyl-L-aspartate + phosphate + H(+). Its pathway is pyrimidine metabolism; UMP biosynthesis via de novo pathway; (S)-dihydroorotate from bicarbonate: step 2/3. Catalyzes the condensation of carbamoyl phosphate and aspartate to form carbamoyl aspartate and inorganic phosphate, the committed step in the de novo pyrimidine nucleotide biosynthesis pathway. The chain is Aspartate carbamoyltransferase catalytic subunit from Methylococcus capsulatus (strain ATCC 33009 / NCIMB 11132 / Bath).